The sequence spans 127 residues: UPF0102 protein Geob_1494 (127 aa).

This sequence belongs to the UPF0102 family.

In Geotalea daltonii (strain DSM 22248 / JCM 15807 / FRC-32) (Geobacter daltonii), this protein is UPF0102 protein Geob_1494.